A 465-amino-acid polypeptide reads, in one-letter code: Poly(A) polymerase I (465 aa).

Catalysis depends on residues D80, D82, and D162. The tract at residues A430–V465 is disordered. Over residues R448–P459 the composition is skewed to basic residues.

It belongs to the tRNA nucleotidyltransferase/poly(A) polymerase family.

The catalysed reaction is RNA(n) + ATP = RNA(n)-3'-adenine ribonucleotide + diphosphate. Functionally, adds poly(A) tail to the 3' end of many RNAs, which usually targets these RNAs for decay. Plays a significant role in the global control of gene expression, through influencing the rate of transcript degradation, and in the general RNA quality control. In Salmonella typhi, this protein is Poly(A) polymerase I.